The following is a 135-amino-acid chain: Transcriptional activator protein (135 aa).

Residues 17 to 32 carry the Nuclear localization signal motif; that stretch reads KIQHHIAKKRQVRRRR. Residues 37–54 fold into a zinc finger; that stretch reads CGCSYYIHLDCINHGFTH. The transactivation stretch occupies residues 120–135; sequence HLDDLTVSDWSFFKSL.

This sequence belongs to the geminiviridae transcriptional activator protein family. Monomer. Homodimer. Homooligomer. Self-interaction correlates with nuclear localization and efficient activation of transcription. Monomers suppress local silencing by interacting with and inactivating host adenosine kinase 2 (ADK2) in the cytoplasm. Interacts with and inhibits host SNF1 kinase. Binds to ssDNA. May interact with host RPS27A. In terms of processing, phosphorylated.

The protein localises to the host nucleus. It is found in the host cytoplasm. In terms of biological role, multifunctional protein that modulates host antiviral defenses and promotes host attractiveness to insect vectors. Acts as a suppressor of RNA-mediated gene silencing, also known as post-transcriptional gene silencing (PTGS), a mechanism of plant viral defense that limits the accumulation of viral RNAs. TrAP suppresses the host RNA silencing by inhibiting adenosine kinase 2 (ADK2), a kinase involved in a general methylation pathway. Also suppresses the host basal defense by interacting with and inhibiting SNF1 kinase, a key regulator of cell metabolism implicated in innate antiviral defense. Functionally, inhibits signal transduction by the phytohormone jasmonate, making the infected plant more attractive to aphids, which are the second host to play a role as a dissemination vector. Acts by binding to ubiquitin precursor RPS27A, thereby preventing ubiquitin degradation of JAZ. The polypeptide is Transcriptional activator protein (Capsicum annuum (Capsicum pepper)).